The sequence spans 309 residues: Protein FdhE (309 aa).

Belongs to the FdhE family.

It is found in the cytoplasm. Its function is as follows. Necessary for formate dehydrogenase activity. This Escherichia coli (strain K12 / MC4100 / BW2952) protein is Protein FdhE.